The following is a 224-amino-acid chain: tRNA (guanine-N(7)-)-methyltransferase (224 aa).

Residues E54, E79, and D129 each coordinate S-adenosyl-L-methionine. D129 is a catalytic residue. Substrate contacts are provided by K133 and D165.

It belongs to the class I-like SAM-binding methyltransferase superfamily. TrmB family.

The catalysed reaction is guanosine(46) in tRNA + S-adenosyl-L-methionine = N(7)-methylguanosine(46) in tRNA + S-adenosyl-L-homocysteine. Its pathway is tRNA modification; N(7)-methylguanine-tRNA biosynthesis. Catalyzes the formation of N(7)-methylguanine at position 46 (m7G46) in tRNA. This chain is tRNA (guanine-N(7)-)-methyltransferase, found in Chlamydia pneumoniae (Chlamydophila pneumoniae).